Reading from the N-terminus, the 175-residue chain is NADH-ubiquinone oxidoreductase chain 6 (175 aa).

A run of 5 helical transmembrane segments spans residues 1 to 21 (MMTY…VGFS), 25 to 45 (SPIY…GIIM), 47 to 67 (FGGS…MLVV), 88 to 108 (TVMG…LYVL), and 149 to 169 (YGAW…LVIL).

This sequence belongs to the complex I subunit 6 family. In terms of assembly, core subunit of respiratory chain NADH dehydrogenase (Complex I) which is composed of 45 different subunits.

It is found in the mitochondrion inner membrane. The catalysed reaction is a ubiquinone + NADH + 5 H(+)(in) = a ubiquinol + NAD(+) + 4 H(+)(out). Core subunit of the mitochondrial membrane respiratory chain NADH dehydrogenase (Complex I) which catalyzes electron transfer from NADH through the respiratory chain, using ubiquinone as an electron acceptor. Essential for the catalytic activity and assembly of complex I. The chain is NADH-ubiquinone oxidoreductase chain 6 (MT-ND6) from Equus asinus (Donkey).